A 363-amino-acid chain; its full sequence is Chorismate synthase (363 aa).

2 residues coordinate NADP(+): Arg48 and Arg54. FMN-binding positions include 131 to 133, 244 to 245, Gly288, 303 to 307, and Arg329; these read RSS, NA, and KPTSS.

Belongs to the chorismate synthase family. In terms of assembly, homotetramer. FMNH2 serves as cofactor.

The catalysed reaction is 5-O-(1-carboxyvinyl)-3-phosphoshikimate = chorismate + phosphate. It participates in metabolic intermediate biosynthesis; chorismate biosynthesis; chorismate from D-erythrose 4-phosphate and phosphoenolpyruvate: step 7/7. Functionally, catalyzes the anti-1,4-elimination of the C-3 phosphate and the C-6 proR hydrogen from 5-enolpyruvylshikimate-3-phosphate (EPSP) to yield chorismate, which is the branch point compound that serves as the starting substrate for the three terminal pathways of aromatic amino acid biosynthesis. This reaction introduces a second double bond into the aromatic ring system. The chain is Chorismate synthase from Maricaulis maris (strain MCS10) (Caulobacter maris).